Reading from the N-terminus, the 215-residue chain is Thymidylate kinase (215 aa).

7-14 provides a ligand contact to ATP; that stretch reads GLDGSGKT.

Belongs to the thymidylate kinase family.

The catalysed reaction is dTMP + ATP = dTDP + ADP. Phosphorylation of dTMP to form dTDP in both de novo and salvage pathways of dTTP synthesis. The polypeptide is Thymidylate kinase (Mycoplasmopsis agalactiae (strain NCTC 10123 / CIP 59.7 / PG2) (Mycoplasma agalactiae)).